The chain runs to 486 residues: UDP-N-acetylmuramate--L-alanine ligase (486 aa).

Position 132–138 (132–138 (GTHGKTT)) interacts with ATP.

Belongs to the MurCDEF family.

It localises to the cytoplasm. The enzyme catalyses UDP-N-acetyl-alpha-D-muramate + L-alanine + ATP = UDP-N-acetyl-alpha-D-muramoyl-L-alanine + ADP + phosphate + H(+). The protein operates within cell wall biogenesis; peptidoglycan biosynthesis. Functionally, cell wall formation. This chain is UDP-N-acetylmuramate--L-alanine ligase, found in Halorhodospira halophila (strain DSM 244 / SL1) (Ectothiorhodospira halophila (strain DSM 244 / SL1)).